A 240-amino-acid polypeptide reads, in one-letter code: Ribonuclease 3 (240 aa).

Residues 9-141 (VEEFQKKTGI…LLAAIYLDQG (133 aa)) enclose the RNase III domain. Position 54 (glutamate 54) interacts with Mg(2+). Residue aspartate 58 is part of the active site. Mg(2+) contacts are provided by aspartate 127 and glutamate 130. Glutamate 130 is an active-site residue. One can recognise a DRBM domain in the interval 168-237 (DYKTALQEIV…ARIAYEKLLK (70 aa)).

It belongs to the ribonuclease III family. As to quaternary structure, homodimer. Requires Mg(2+) as cofactor.

It localises to the cytoplasm. The enzyme catalyses Endonucleolytic cleavage to 5'-phosphomonoester.. Functionally, digests double-stranded RNA. Involved in the processing of primary rRNA transcript to yield the immediate precursors to the large and small rRNAs (23S and 16S). Processes some mRNAs, and tRNAs when they are encoded in the rRNA operon. Processes pre-crRNA and tracrRNA of type II CRISPR loci if present in the organism. This Thermotoga petrophila (strain ATCC BAA-488 / DSM 13995 / JCM 10881 / RKU-1) protein is Ribonuclease 3.